A 572-amino-acid chain; its full sequence is Proline--tRNA ligase (572 aa).

Belongs to the class-II aminoacyl-tRNA synthetase family. ProS type 1 subfamily. As to quaternary structure, homodimer.

The protein resides in the cytoplasm. The enzyme catalyses tRNA(Pro) + L-proline + ATP = L-prolyl-tRNA(Pro) + AMP + diphosphate. Catalyzes the attachment of proline to tRNA(Pro) in a two-step reaction: proline is first activated by ATP to form Pro-AMP and then transferred to the acceptor end of tRNA(Pro). As ProRS can inadvertently accommodate and process non-cognate amino acids such as alanine and cysteine, to avoid such errors it has two additional distinct editing activities against alanine. One activity is designated as 'pretransfer' editing and involves the tRNA(Pro)-independent hydrolysis of activated Ala-AMP. The other activity is designated 'posttransfer' editing and involves deacylation of mischarged Ala-tRNA(Pro). The misacylated Cys-tRNA(Pro) is not edited by ProRS. The protein is Proline--tRNA ligase of Enterococcus faecalis (strain ATCC 700802 / V583).